We begin with the raw amino-acid sequence, 154 residues long: Myoglobin (154 aa).

The Globin domain maps to 2–148 (VLSDAEWQLV…FRKDIAAKYK (147 aa)). The residue at position 4 (serine 4) is a Phosphoserine. Residue histidine 65 coordinates nitrite. Histidine 65 is a binding site for O2. The residue at position 68 (threonine 68) is a Phosphothreonine. Histidine 94 provides a ligand contact to heme b.

This sequence belongs to the globin family. Monomeric.

Its subcellular location is the cytoplasm. It is found in the sarcoplasm. The catalysed reaction is Fe(III)-heme b-[protein] + nitric oxide + H2O = Fe(II)-heme b-[protein] + nitrite + 2 H(+). The enzyme catalyses H2O2 + AH2 = A + 2 H2O. In terms of biological role, monomeric heme protein which primary function is to store oxygen and facilitate its diffusion within muscle tissues. Reversibly binds oxygen through a pentacoordinated heme iron and enables its timely and efficient release as needed during periods of heightened demand. Depending on the oxidative conditions of tissues and cells, and in addition to its ability to bind oxygen, it also has a nitrite reductase activity whereby it regulates the production of bioactive nitric oxide. Under stress conditions, like hypoxia and anoxia, it also protects cells against reactive oxygen species thanks to its pseudoperoxidase activity. The chain is Myoglobin (MB) from Megaptera novaeangliae (Humpback whale).